Reading from the N-terminus, the 293-residue chain is Energy-coupling factor transporter ATP-binding protein EcfA2 (293 aa).

Residues Ile-3–Asp-246 form the ABC transporter domain. Gly-40–Ser-47 lines the ATP pocket.

The protein belongs to the ABC transporter superfamily. Energy-coupling factor EcfA family. Forms a stable energy-coupling factor (ECF) transporter complex composed of 2 membrane-embedded substrate-binding proteins (S component), 2 ATP-binding proteins (A component) and 2 transmembrane proteins (T component).

It localises to the cell membrane. In terms of biological role, ATP-binding (A) component of a common energy-coupling factor (ECF) ABC-transporter complex. Unlike classic ABC transporters this ECF transporter provides the energy necessary to transport a number of different substrates. The protein is Energy-coupling factor transporter ATP-binding protein EcfA2 of Bacillus anthracis.